The following is a 189-amino-acid chain: Batroxicidin (189 aa).

The signal sequence occupies residues 1-22; that stretch reads MQGFFWKTWLVVALCGTSSSLA. Residues 23 to 155 constitute a propeptide that is removed on maturation; that stretch reads HRPLSYGEAL…DEEKDRPKRV (133 aa). Intrachain disulfides connect Cys79–Cys90 and Cys101–Cys118. Over residues 125–148 the composition is skewed to acidic residues; the sequence is EEEEEDEEEQKAEVEKDEEKEDEE. Positions 125–152 are disordered; it reads EEEEEDEEEQKAEVEKDEEKEDEEKDRP.

It belongs to the cathelicidin family. As to expression, expressed by the venom gland.

It is found in the secreted. It localises to the target cell membrane. Functionally, potent antimicrobial peptide against Gram-negative (MIC=0.25 ug/ml against E.coli ATCC 25922, MIC=1 ug/ml against P.aeruginosa) and Gram-positive bacteria (MIC=32 ug/ml against E.faecalis, MIC=32 ug/ml against S.aureus). Adopts an amphipathic alpha helical conformation, that may allow to partition into the target membrane. Low hemolytic activities have been observed on mammalian cells. In addition, when tested in vitro on the parasite Trypanosoma cruzi (responsible of the Chagas disease), is able to reduce the number of the three forms (epimastigote, trypomastigote and amastigote) by inducing cell death through necrosis. This Bothrops atrox (Barba amarilla) protein is Batroxicidin.